A 529-amino-acid chain; its full sequence is Delayed-rectifier potassium channel regulatory subunit KCNS1 (529 aa).

At 1–217 (MLMLLVRGTH…LTMENPGYSL (217 aa)) the chain is on the cytoplasmic side. A helical membrane pass occupies residues 218 to 239 (PSKLFSCVSISVVLASIAAMCI). At 240-270 (HSLPEYQAREAAAAVAAVAAGRSPEGVRDDP) the chain is on the extracellular side. The helical transmembrane segment at 271–293 (VLRRLEYFCIAWFSFEVSSRLLL) threads the bilayer. Over 294–304 (APSTRNFFCHP) the chain is Cytoplasmic. The chain crosses the membrane as a helical span at residues 305-322 (LNLIDIVSVLPFYLTLLA). The Extracellular portion of the chain corresponds to 323–340 (GVALGDQGGTGGKELGHL). The chain crosses the membrane as a helical; Voltage-sensor span at residues 341 to 361 (GKVVQVFRLMRIFRVLKLARH). At 362-376 (STGLRSLGATLKHSY) the chain is on the cytoplasmic side. A helical membrane pass occupies residues 377-398 (REVGILLLYLAVGVSVFSGVAY). At 399–411 (TAEKEEDVGFNTI) the chain is on the extracellular side. Residues 412-423 (PACWWWGTVSMT) constitute an intramembrane region (helical). Residues 424 to 429 (TVGYGD) carry the Selectivity filter motif. The stretch at 424–431 (TVGYGDVV) is an intramembrane region. The Extracellular segment spans residues 432 to 438 (PVTVAGK). Residues 439-467 (LAASGCILGGILVVALPITIIFNKFSHFY) traverse the membrane as a helical segment. Topologically, residues 468–529 (RRQKALEAAV…PSEPPHPQMY (62 aa)) are cytoplasmic. A disordered region spans residues 494 to 529 (GVSEASLETSRETSQEGRSADLETQAPSEPPHPQMY). The span at 502–514 (TSRETSQEGRSAD) shows a compositional bias: basic and acidic residues.

The protein belongs to the potassium channel family. S (TC 1.A.1.2) subfamily. Kv9.1/KCNS1 sub-subfamily. Heterotetramer with KCNB1. Heterotetramer with KCNB2. Does not form homomultimers.

It is found in the cell membrane. Its function is as follows. Potassium channel regulatory subunit that modulate the delayed rectifier voltage-gated potassium channel activity of KCNB1 and KCNB2 by altering their kinetics, expression levels, and shifting the half-inactivation potential to more polarized values. While it does not form functional channels on its own, it can form functional heterotetrameric channels with KCNB1 and KCNB2. Each regulatory subunit has unique regulatory properties that can lead to extensive inhibition, significant changes in kinetics, and/or substantial shifts in the voltage dependencies of the inactivation process. The protein is Delayed-rectifier potassium channel regulatory subunit KCNS1 of Macaca mulatta (Rhesus macaque).